Reading from the N-terminus, the 278-residue chain is Large ribosomal subunit protein uL2 (278 aa).

3 disordered regions span residues 1–20 (MAIR…SVSD), 25–57 (TRST…RGGG), and 224–278 (VVMN…GKKR). Composition is skewed to basic residues over residues 45-57 (AHGR…RGGG) and 269-278 (VRRRKTGKKR).

The protein belongs to the universal ribosomal protein uL2 family. As to quaternary structure, part of the 50S ribosomal subunit. Forms a bridge to the 30S subunit in the 70S ribosome.

Functionally, one of the primary rRNA binding proteins. Required for association of the 30S and 50S subunits to form the 70S ribosome, for tRNA binding and peptide bond formation. It has been suggested to have peptidyltransferase activity; this is somewhat controversial. Makes several contacts with the 16S rRNA in the 70S ribosome. This chain is Large ribosomal subunit protein uL2, found in Nocardia farcinica (strain IFM 10152).